A 78-amino-acid chain; its full sequence is Sec-independent protein translocase protein TatA (78 aa).

A helical membrane pass occupies residues 1–21; it reads MGSLSIWHWIVVVAVILLLFG. A compositionally biased stretch (basic and acidic residues) spans 43-55; it reads MKDDEKTAEKPEP. Residues 43–78 are disordered; sequence MKDDEKTAEKPEPVKTINHNADGSGAARSDTGSKVI.

Belongs to the TatA/E family. The Tat system comprises two distinct complexes: a TatABC complex, containing multiple copies of TatA, TatB and TatC subunits, and a separate TatA complex, containing only TatA subunits. Substrates initially bind to the TatABC complex, which probably triggers association of the separate TatA complex to form the active translocon.

The protein resides in the cell inner membrane. Functionally, part of the twin-arginine translocation (Tat) system that transports large folded proteins containing a characteristic twin-arginine motif in their signal peptide across membranes. TatA could form the protein-conducting channel of the Tat system. This is Sec-independent protein translocase protein TatA from Nitrobacter winogradskyi (strain ATCC 25391 / DSM 10237 / CIP 104748 / NCIMB 11846 / Nb-255).